The following is a 450-amino-acid chain: F-box protein KIB3 (450 aa).

The F-box domain maps to 20–50 (DLVRLILERLSFVDFHRARCVSSTWYVASKS).

The protein resides in the cytoplasm. It localises to the nucleus. Its subcellular location is the nucleolus. Functionally, component of SCF(ASK-cullin-F-box) E3 ubiquitin ligase complexes, which may mediate the ubiquitination and subsequent proteasomal degradation of target proteins. Required for brassinosteroid (BR) signal transduction. Mediates ASK7/BIN2/SK21 inactivation both by competing with substrate binding (e.g. BZR1) and by promoting its ubiquitination and subsequent proteasomal degradation. The protein is F-box protein KIB3 of Arabidopsis thaliana (Mouse-ear cress).